Here is a 1385-residue protein sequence, read N- to C-terminus: Kinesin-like protein KIF15 (1385 aa).

Positions 1 to 24 (MAPGCKSELRNVTNSHSNQPSNED) are disordered. Over residues 10 to 21 (RNVTNSHSNQPS) the composition is skewed to polar residues. Positions 26 to 363 (AIKVFVRIRP…LNFAQRAKLI (338 aa)) constitute a Kinesin motor domain. 109 to 116 (GQTGSGKT) provides a ligand contact to ATP. Residues 368–1385 (VVNEDTQGNV…NVFLKERKKE (1018 aa)) are a coiled coil. The residue at position 1007 (K1007) is an N6-acetyllysine. Phosphoserine occurs at positions 1139 and 1167. The segment at 1222–1243 (DMKRQGESSSQSRPDSQQLKNE) is disordered. Residues 1228-1241 (ESSSQSRPDSQQLK) show a composition bias toward polar residues.

It belongs to the TRAFAC class myosin-kinesin ATPase superfamily. Kinesin family. KLP2 subfamily. In terms of assembly, interacts with MKI67 and TPX2. As to expression, expressed in sympathetic neurons.

The protein resides in the cytoplasm. Its subcellular location is the cytoskeleton. The protein localises to the spindle. Functionally, plus-end directed kinesin-like motor enzyme involved in mitotic spindle assembly. The polypeptide is Kinesin-like protein KIF15 (Kif15) (Rattus norvegicus (Rat)).